Reading from the N-terminus, the 103-residue chain is Large ribosomal subunit protein uL24 (103 aa).

Belongs to the universal ribosomal protein uL24 family. As to quaternary structure, part of the 50S ribosomal subunit.

One of two assembly initiator proteins, it binds directly to the 5'-end of the 23S rRNA, where it nucleates assembly of the 50S subunit. Its function is as follows. One of the proteins that surrounds the polypeptide exit tunnel on the outside of the subunit. This Haemophilus influenzae (strain 86-028NP) protein is Large ribosomal subunit protein uL24.